The following is an 87-amino-acid chain: uncharacterized protein (87 aa).

Residues K52–A87 form a disordered region. Residues S71 to A87 are compositionally biased toward acidic residues.

This is an uncharacterized protein from Autographa californica nuclear polyhedrosis virus (AcMNPV).